A 343-amino-acid chain; its full sequence is Heat-inducible transcription repressor HrcA (343 aa).

This sequence belongs to the HrcA family.

Negative regulator of class I heat shock genes (grpE-dnaK-dnaJ and groELS operons). Prevents heat-shock induction of these operons. This is Heat-inducible transcription repressor HrcA from Mycolicibacterium paratuberculosis (strain ATCC BAA-968 / K-10) (Mycobacterium paratuberculosis).